A 613-amino-acid chain; its full sequence is Isocitrate dehydrogenase kinase/phosphatase (613 aa).

Residues 328 to 334 and lysine 349 each bind ATP; that span reads APGIRGL. Aspartate 384 is an active-site residue.

The protein belongs to the AceK family.

It is found in the cytoplasm. The enzyme catalyses L-seryl-[isocitrate dehydrogenase] + ATP = O-phospho-L-seryl-[isocitrate dehydrogenase] + ADP + H(+). Functionally, bifunctional enzyme which can phosphorylate or dephosphorylate isocitrate dehydrogenase (IDH) on a specific serine residue. This is a regulatory mechanism which enables bacteria to bypass the Krebs cycle via the glyoxylate shunt in response to the source of carbon. When bacteria are grown on glucose, IDH is fully active and unphosphorylated, but when grown on acetate or ethanol, the activity of IDH declines drastically concomitant with its phosphorylation. In Cupriavidus necator (strain ATCC 17699 / DSM 428 / KCTC 22496 / NCIMB 10442 / H16 / Stanier 337) (Ralstonia eutropha), this protein is Isocitrate dehydrogenase kinase/phosphatase.